Reading from the N-terminus, the 125-residue chain is Small ribosomal subunit protein uS12c (125 aa).

The protein belongs to the universal ribosomal protein uS12 family. As to quaternary structure, part of the 30S ribosomal subunit.

Its subcellular location is the plastid. The protein localises to the chloroplast. Its function is as follows. With S4 and S5 plays an important role in translational accuracy. Located at the interface of the 30S and 50S subunits. The chain is Small ribosomal subunit protein uS12c (rps12) from Nephroselmis olivacea (Green alga).